Here is an 856-residue protein sequence, read N- to C-terminus: V-type proton ATPase 116 kDa subunit a 2 (856 aa).

The Cytoplasmic segment spans residues 1 to 393; that stretch reads MGSLFRSETM…DAYGVGSYRE (393 aa). A helical membrane pass occupies residues 394–412; that stretch reads VNPALFTIITFPFLFAVMF. Residues 413-414 are Vacuolar-facing; that stretch reads GD. Residues 415-431 form a helical membrane-spanning segment; sequence FGHGFVMFLFALLLVLN. The Cytoplasmic segment spans residues 432-445; sequence ENHPRLNQSQEIMR. The helical transmembrane segment at 446–475 threads the bilayer; it reads MFFNGRYILLLMGLFSVYTGLIYNDCFSKS. Topologically, residues 476–549 are vacuolar; the sequence is VNLFGSGWNV…ATNRLTFLNS (74 aa). N-linked (GlcNAc...) asparagine glycans are attached at residues N484 and N505. Residues 550–569 traverse the membrane as a helical segment; that stretch reads FKMKMSVILGIIHMTFGVIL. At 570–587 the chain is on the cytoplasmic side; sequence GIFNHLHFRKKFNIYLVS. Residues 588–608 traverse the membrane as a helical segment; sequence IPELLFMLCIFGYLIFMIFYK. At 609–651 the chain is on the vacuolar side; the sequence is WLVFSAETSRVAPSILIEFINMFLFPASKTSGLYTGQEYVQRV. Residues 652–671 form a helical membrane-spanning segment; that stretch reads LLVVTALSVPVLFLGKPLFL. Topologically, residues 672–739 are cytoplasmic; that stretch reads LWLHNGRSCF…EILMTQVIHS (68 aa). A phosphoserine mark is found at S695 and S700. Residues 740-764 traverse the membrane as a helical segment; that stretch reads IEYCLGCISNTASYLRLWALSLAHA. Residues 765–785 are Vacuolar-facing; that stretch reads QLSDVLWAMLMRVGLRVDTTY. The chain crosses the membrane as a helical span at residues 786 to 824; it reads GVLLLLPVIALFAVLTIFILLIMEGLSAFLHAIRLHWVE. The Cytoplasmic portion of the chain corresponds to 825 to 856; that stretch reads FQNKFYVGAGTKFVPFSFSLLSSKFNNDDSVA.

It belongs to the V-ATPase 116 kDa subunit family. V-ATPase is a heteromultimeric enzyme made up of two complexes: the ATP-hydrolytic V1 complex and the proton translocation V0 complex. The V1 complex consists of three catalytic AB heterodimers that form a heterohexamer, three peripheral stalks each consisting of EG heterodimers, one central rotor including subunits D and F, and the regulatory subunits C and H. The proton translocation complex V0 consists of the proton transport subunit a, a ring of proteolipid subunits c9c'', rotary subunit d, subunits e and f, and the accessory subunits ATP6AP1/Ac45 and ATP6AP2/PRR. Directly interacts with PSCD2 through its N-terminal cytosolic tail in an intra-endosomal acidification-dependent manner. Disruption of this interaction results in the inhibition of endocytosis. Interacts with SPAAR.

It localises to the cell membrane. It is found in the endosome membrane. Subunit of the V0 complex of vacuolar(H+)-ATPase (V-ATPase), a multisubunit enzyme composed of a peripheral complex (V1) that hydrolyzes ATP and a membrane integral complex (V0) that translocates protons. V-ATPase is responsible for acidifying and maintaining the pH of intracellular compartments and in some cell types, is targeted to the plasma membrane, where it is responsible for acidifying the extracellular environment. Essential component of the endosomal pH-sensing machinery. May play a role in maintaining the Golgi functions, such as glycosylation maturation, by controlling the Golgi pH. In aerobic conditions, involved in intracellular iron homeostasis, thus triggering the activity of Fe(2+) prolyl hydroxylase (PHD) enzymes, and leading to HIF1A hydroxylation and subsequent proteasomal degradation. The sequence is that of V-type proton ATPase 116 kDa subunit a 2 (ATP6V0A2) from Homo sapiens (Human).